The following is a 732-amino-acid chain: Catalase-peroxidase (732 aa).

Positions 1 to 29 are disordered; that stretch reads MTTESKCPFSGGGKPNTPRRGPSNQDWWP. Positions 96 to 223 form a cross-link, tryptophyl-tyrosyl-methioninium (Trp-Tyr) (with M-249); the sequence is WHSAGTYRIG…LAAVQMGLIY (128 aa). H97 functions as the Proton acceptor in the catalytic mechanism. Residues 223–249 constitute a cross-link (tryptophyl-tyrosyl-methioninium (Tyr-Met) (with W-96)); that stretch reads YVNPEGPDGNPDPVAAARDIRETFARM. H264 serves as a coordination point for heme b.

Belongs to the peroxidase family. Peroxidase/catalase subfamily. In terms of assembly, homodimer or homotetramer. It depends on heme b as a cofactor. Post-translationally, formation of the three residue Trp-Tyr-Met cross-link is important for the catalase, but not the peroxidase activity of the enzyme.

The enzyme catalyses H2O2 + AH2 = A + 2 H2O. It carries out the reaction 2 H2O2 = O2 + 2 H2O. Its function is as follows. Bifunctional enzyme with both catalase and broad-spectrum peroxidase activity. The sequence is that of Catalase-peroxidase from Serratia proteamaculans (strain 568).